Reading from the N-terminus, the 233-residue chain is Segregation and condensation protein A (233 aa).

This sequence belongs to the ScpA family. Component of a cohesin-like complex composed of ScpA, ScpB and the Smc homodimer, in which ScpA and ScpB bind to the head domain of Smc. The presence of the three proteins is required for the association of the complex with DNA.

Its subcellular location is the cytoplasm. In terms of biological role, participates in chromosomal partition during cell division. May act via the formation of a condensin-like complex containing Smc and ScpB that pull DNA away from mid-cell into both cell halves. In Streptococcus pyogenes serotype M1, this protein is Segregation and condensation protein A.